A 363-amino-acid polypeptide reads, in one-letter code: S-adenosylmethionine:tRNA ribosyltransferase-isomerase (363 aa).

The protein belongs to the QueA family. In terms of assembly, monomer.

It is found in the cytoplasm. The enzyme catalyses 7-aminomethyl-7-carbaguanosine(34) in tRNA + S-adenosyl-L-methionine = epoxyqueuosine(34) in tRNA + adenine + L-methionine + 2 H(+). Its pathway is tRNA modification; tRNA-queuosine biosynthesis. Functionally, transfers and isomerizes the ribose moiety from AdoMet to the 7-aminomethyl group of 7-deazaguanine (preQ1-tRNA) to give epoxyqueuosine (oQ-tRNA). The chain is S-adenosylmethionine:tRNA ribosyltransferase-isomerase from Brucella melitensis biotype 2 (strain ATCC 23457).